The sequence spans 241 residues: MILTIDVGNTRIKSAVFKYNTIIETAFFSNKNFQSEIENILNLNNKIKVLVVASVGKLEKEAFELFSNRVYVCFISRESTFPFQNNYATQSTLGIDRMVLSAGAVFQFPKKNRLIIDAGTCLTYDFVDENDVYQGGAISPGIRLRYEVMHNYTAKLPLLTLQEPQSLIGNTTNQSLHSGVVNGLTFEIEGYIEAVRGKNENFIIILTGGDANFLAKRLKNTIFANSNFLLESLNNLYQYQK.

Residue 6–13 (DVGNTRIK) participates in ATP binding. 94–97 (GIDR) serves as a coordination point for substrate. Asp96 serves as the catalytic Proton acceptor. Asp117 lines the K(+) pocket. ATP is bound at residue Thr120. Thr172 serves as a coordination point for substrate.

Belongs to the type III pantothenate kinase family. As to quaternary structure, homodimer. It depends on NH4(+) as a cofactor. The cofactor is K(+).

The protein resides in the cytoplasm. The catalysed reaction is (R)-pantothenate + ATP = (R)-4'-phosphopantothenate + ADP + H(+). It functions in the pathway cofactor biosynthesis; coenzyme A biosynthesis; CoA from (R)-pantothenate: step 1/5. In terms of biological role, catalyzes the phosphorylation of pantothenate (Pan), the first step in CoA biosynthesis. The polypeptide is Type III pantothenate kinase (Flavobacterium psychrophilum (strain ATCC 49511 / DSM 21280 / CIP 103535 / JIP02/86)).